We begin with the raw amino-acid sequence, 141 residues long: 15 kDa lipoprotein (141 aa).

The first 17 residues, 1–17, serve as a signal peptide directing secretion; the sequence is MVKRGRFALCLAVLLGA. C18 is lipidated: N-palmitoyl cysteine. A lipid anchor (S-diacylglycerol cysteine) is attached at C18.

Its subcellular location is the cell membrane. This Treponema pallidum (strain Nichols) protein is 15 kDa lipoprotein (tpp15).